The primary structure comprises 120 residues: Phosphoribosyl-AMP cyclohydrolase (120 aa).

Aspartate 75 contributes to the Mg(2+) binding site. Cysteine 76 serves as a coordination point for Zn(2+). Residues aspartate 77 and aspartate 79 each coordinate Mg(2+). Zn(2+) is bound by residues cysteine 92 and cysteine 99.

Belongs to the PRA-CH family. As to quaternary structure, homodimer. It depends on Mg(2+) as a cofactor. Requires Zn(2+) as cofactor.

Its subcellular location is the cytoplasm. The enzyme catalyses 1-(5-phospho-beta-D-ribosyl)-5'-AMP + H2O = 1-(5-phospho-beta-D-ribosyl)-5-[(5-phospho-beta-D-ribosylamino)methylideneamino]imidazole-4-carboxamide. The protein operates within amino-acid biosynthesis; L-histidine biosynthesis; L-histidine from 5-phospho-alpha-D-ribose 1-diphosphate: step 3/9. Its function is as follows. Catalyzes the hydrolysis of the adenine ring of phosphoribosyl-AMP. This chain is Phosphoribosyl-AMP cyclohydrolase, found in Haloarcula marismortui (strain ATCC 43049 / DSM 3752 / JCM 8966 / VKM B-1809) (Halobacterium marismortui).